A 413-amino-acid polypeptide reads, in one-letter code: Falstatin (413 aa).

Positions 1–21 are cleaved as a signal peptide; sequence MNLLVFFCFFLLSCIVHLSRC. Residues 284 to 294 carry the BC loop; binds and inhibits the active site cavity of cysteine proteases motif; it reads LDSVNGNGFVW. Polar residues-rich tracts occupy residues 325 to 339 and 346 to 360; these read ISVT…NSNT and NNKQ…TTNH. Residues 325–367 are disordered; that stretch reads ISVTNPVPIPKNSNTNKDDSINNKQDGSQNNTTTNHFPKPREQ.

Belongs to the protease inhibitor I71 family. As to quaternary structure, oligomer; probably composed of 10 monomers. Proteolytically cleaved.

It localises to the secreted. The protein resides in the cytoplasmic vesicle. Its subcellular location is the secretory vesicle. It is found in the microneme. The protein localises to the parasitophorous vacuole lumen. It localises to the host cytoplasm. Cysteine protease inhibitor. Inhibits cysteine protease falcipains FP2 and FP3. Required for the invasion of host erythrocytes by merozoites. In the mosquito vector, essential for the gliding motility of hemocoel sporozoites and, therefore, for salivary gland invasion and the subsequent transmission from the mosquito to the mammalian host. Required for the invasion of host hepatocytes. During the liver stage, may prevent host hepatocyte cell death likely by inhibiting host cysteine proteases. The sequence is that of Falstatin from Plasmodium falciparum (isolate 3D7).